The sequence spans 123 residues: Small ribosomal subunit protein uS12 (123 aa).

The residue at position 89 (Asp89) is a 3-methylthioaspartic acid. The tract at residues Thr104–Lys123 is disordered. The span at Ala113–Lys123 shows a compositional bias: basic residues.

Belongs to the universal ribosomal protein uS12 family. In terms of assembly, part of the 30S ribosomal subunit. Contacts proteins S8 and S17. May interact with IF1 in the 30S initiation complex.

Functionally, with S4 and S5 plays an important role in translational accuracy. Its function is as follows. Interacts with and stabilizes bases of the 16S rRNA that are involved in tRNA selection in the A site and with the mRNA backbone. Located at the interface of the 30S and 50S subunits, it traverses the body of the 30S subunit contacting proteins on the other side and probably holding the rRNA structure together. The combined cluster of proteins S8, S12 and S17 appears to hold together the shoulder and platform of the 30S subunit. This Neisseria meningitidis serogroup C (strain 053442) protein is Small ribosomal subunit protein uS12.